Here is a 456-residue protein sequence, read N- to C-terminus: Arginine biosynthesis bifunctional protein ArgJ, mitochondrial (456 aa).

Substrate contacts are provided by Thr-184, Lys-213, Thr-224, Glu-311, Asn-451, and Thr-456. Catalysis depends on Thr-224, which acts as the Nucleophile.

It belongs to the ArgJ family. Heterodimer of an alpha and a beta chain. Post-translationally, the alpha and beta chains are autoproteolytically processed from a single precursor protein within the mitochondrion.

It localises to the mitochondrion matrix. The enzyme catalyses N(2)-acetyl-L-ornithine + L-glutamate = N-acetyl-L-glutamate + L-ornithine. It carries out the reaction L-glutamate + acetyl-CoA = N-acetyl-L-glutamate + CoA + H(+). It functions in the pathway amino-acid biosynthesis; L-arginine biosynthesis; L-ornithine and N-acetyl-L-glutamate from L-glutamate and N(2)-acetyl-L-ornithine (cyclic): step 1/1. Its pathway is amino-acid biosynthesis; L-arginine biosynthesis; N(2)-acetyl-L-ornithine from L-glutamate: step 1/4. Its function is as follows. Catalyzes two activities which are involved in the cyclic version of arginine biosynthesis: the synthesis of acetylglutamate from glutamate and acetyl-CoA, and of ornithine by transacetylation between acetylornithine and glutamate. The chain is Arginine biosynthesis bifunctional protein ArgJ, mitochondrial from Neosartorya fischeri (strain ATCC 1020 / DSM 3700 / CBS 544.65 / FGSC A1164 / JCM 1740 / NRRL 181 / WB 181) (Aspergillus fischerianus).